A 354-amino-acid chain; its full sequence is Guanine nucleotide-binding protein G(t) subunit alpha-3 (354 aa).

A disordered region spans residues 1 to 26 (MGIGISSESKESAKRSKELEKKLQED). Residue glycine 2 is the site of N-myristoyl glycine attachment. Residues 8-26 (ESKESAKRSKELEKKLQED) show a composition bias toward basic and acidic residues. In terms of domain architecture, G-alpha spans 32–354 (RTVKLLLLGA…KENLKDCGLF (323 aa)). Residues 35 to 48 (KLLLLGAGESGKST) are G1 motif. Residues 40 to 47 (GAGESGKS), 175 to 181 (LHSRVKT), 200 to 204 (DVGGQ), 269 to 272 (NKKD), and alanine 326 contribute to the GTP site. Serine 47 and threonine 181 together coordinate Mg(2+). Positions 173-181 (DVLHSRVKT) are G2 motif. Residues 196–205 (FRMFDVGGQR) are G3 motif. A G4 motif region spans residues 265–272 (VLFLNKKD). The tract at residues 324–329 (TCATDT) is G5 motif.

The protein belongs to the G-alpha family. G(i/o/t/z) subfamily. In terms of assembly, g proteins are composed of 3 units; alpha, beta and gamma, respectively GNAT3, GNB1 and GNG13 for Gustducin heterotrimer for bitter taste transduction. The alpha chain contains the guanine nucleotide binding site. Component of the TAS2R14-GNAT3 complex, consisting of TAS2R14, GNAT3, GNB1 and GNG2; within the complex interacts with TAS2R14; this complex plays a role in the perception of bitterness. Gustducin heterotrimer may also be composed of GNAT3, GNB3 and GNG13. In terms of tissue distribution, expressed in epithelial cells of taste buds of the circumvallate, foliate and fungiform. Detected in various region of the respiratory track. Expressed also in spermatozoa.

The protein resides in the cytoplasm. Functionally, guanine nucleotide-binding protein (G protein) alpha subunit playing a prominent role in bitter and sweet taste transduction as well as in umami (monosodium glutamate, monopotassium glutamate, and inosine monophosphate) taste transduction. This is Guanine nucleotide-binding protein G(t) subunit alpha-3 (GNAT3) from Bos taurus (Bovine).